The following is an 806-amino-acid chain: Leucine--tRNA ligase (806 aa).

Residues 40–51 (PYPSGQGLHVGH) carry the 'HIGH' region motif. The 'KMSKS' region motif lies at 578-582 (KMSKS). Lysine 581 contributes to the ATP binding site.

It belongs to the class-I aminoacyl-tRNA synthetase family.

It localises to the cytoplasm. The catalysed reaction is tRNA(Leu) + L-leucine + ATP = L-leucyl-tRNA(Leu) + AMP + diphosphate. The protein is Leucine--tRNA ligase of Limosilactobacillus reuteri (strain DSM 20016) (Lactobacillus reuteri).